The chain runs to 245 residues: MLIIPAIDLKDGACVRLRQGRMEDSTVFSDDPVAMAAKWVDGGCRRLHLVDLNGAFEGQPVNGDVVTAIARRYPNLPIQIGGGIRSLETIEHYVKAGVSYVIIGTKAVKEPEFVAEACRAFPGKVIVGLDAKDGFVATDGWAEVSSVQVIDLAKRFEADGVSAIVYTDIAKDGMMQGCNIPFTAALAAATRIPVIASGGIHNLGDIQALLNAKAPGIIGAITGRAIYEGTLDVAEAQALCDREQR.

The active-site Proton acceptor is D8. D130 serves as the catalytic Proton donor.

It belongs to the HisA/HisF family.

The protein resides in the cytoplasm. It catalyses the reaction 1-(5-phospho-beta-D-ribosyl)-5-[(5-phospho-beta-D-ribosylamino)methylideneamino]imidazole-4-carboxamide = 5-[(5-phospho-1-deoxy-D-ribulos-1-ylimino)methylamino]-1-(5-phospho-beta-D-ribosyl)imidazole-4-carboxamide. The protein operates within amino-acid biosynthesis; L-histidine biosynthesis; L-histidine from 5-phospho-alpha-D-ribose 1-diphosphate: step 4/9. In Pseudomonas savastanoi pv. phaseolicola (strain 1448A / Race 6) (Pseudomonas syringae pv. phaseolicola (strain 1448A / Race 6)), this protein is 1-(5-phosphoribosyl)-5-[(5-phosphoribosylamino)methylideneamino] imidazole-4-carboxamide isomerase.